We begin with the raw amino-acid sequence, 308 residues long: 1-acyl-sn-glycerol-3-phosphate acyltransferase (308 aa).

A run of 3 helical transmembrane segments spans residues 65 to 85 (FLSMMVTTIVWNMIMLILLPW), 124 to 144 (AIYICNHASLVDIFLIMWLIP), and 148 to 168 (VTIAKKEIIWYPLFGQLYVLA). The short motif at 130-135 (HASLVD) is the HXXXXD motif element.

This sequence belongs to the 1-acyl-sn-glycerol-3-phosphate acyltransferase family.

Its subcellular location is the membrane. It catalyses the reaction a 1-acyl-sn-glycero-3-phosphate + an acyl-CoA = a 1,2-diacyl-sn-glycero-3-phosphate + CoA. Converts lysophosphatidic acid (LPA) into phosphatidic acid by incorporating acyl moiety at the 2 position. This enzyme shows a preference for medium-chain-length fatty acyl-coenzyme a substrates. This is 1-acyl-sn-glycerol-3-phosphate acyltransferase from Cocos nucifera (Coconut palm).